A 1286-amino-acid chain; its full sequence is CLIP-associating protein 2 (1286 aa).

The interval methionine 1–threonine 40 is golgi localization. Residues serine 14 and serine 20 each carry the phosphoserine modification. The disordered stretch occupies residues aspartate 17 to glycine 67. Positions serine 53–glycine 67 are enriched in gly residues. The tract at residues glycine 66–serine 317 is TOG 1. HEAT repeat units lie at residues histidine 179–threonine 214, histidine 215–threonine 251, and arginine 256–glycine 293. The tract at residues valine 320 to serine 374 is disordered. Serine 322, serine 333, and serine 336 each carry phosphoserine. Residues serine 322–proline 340 show a composition bias toward low complexity. Positions phenylalanine 341–threonine 352 are enriched in polar residues. Serine 374, serine 376, and serine 413 each carry phosphoserine. Residues tyrosine 411–valine 473 form a disordered region. Over residues threonine 417–valine 431 the composition is skewed to basic and acidic residues. The interaction with microtubules, MAPRE1 and MAPRE3 stretch occupies residues arginine 450–serine 565. The span at serine 459 to valine 473 shows a compositional bias: low complexity. Phosphoserine occurs at positions 461, 465, 469, 484, and 495. Residues serine 493–serine 564 are disordered. Residues serine 500–proline 503 carry the SXIP motif 1; mediates interaction with MAPRE1 and targeting to microtubule plus ends motif. Serine 513 is subject to Phosphoserine. Residues serine 523 to proline 526 carry the SXIP motif 2; mediates interaction with MAPRE1 and targeting to microtubule plus ends motif. Residues serine 531, serine 535, serine 570, serine 572, serine 581, serine 614, and serine 620 each carry the phosphoserine modification. The segment covering arginine 605–aspartate 616 has biased composition (basic and acidic residues). The interval arginine 605–isoleucine 638 is disordered. The span at serine 620–arginine 634 shows a compositional bias: low complexity. The tract at residues methionine 642–asparagine 873 is TOG 2. 2 HEAT repeats span residues lysine 702–alanine 739 and leucine 764–proline 801. The residue at position 779 (threonine 779) is a Phosphothreonine. The interaction with RSN and localization to the Golgi and kinetochores stretch occupies residues threonine 864–serine 1286. Disordered stretches follow at residues histidine 870–aspartate 920 and serine 944–alanine 989. Polar residues-rich tracts occupy residues arginine 872–serine 884 and serine 893–proline 914. The residue at position 884 (serine 884) is a Phosphoserine. Serine 944, serine 947, serine 1005, and serine 1021 each carry phosphoserine. Over residues serine 947 to glycine 964 the composition is skewed to basic and acidic residues. Residues arginine 1009–serine 1286 are required for cortical localization. 3 HEAT repeats span residues leucine 1046 to glutamate 1083, glutamate 1090 to alanine 1127, and methionine 1208 to aspartate 1245.

This sequence belongs to the CLASP family. In terms of assembly, interacts with microtubules. Interacts with MAPRE1; probably required for targeting to growing microtubule plus ends. Interacts with ERC1, MAPRE3 and PHLDB2. The interaction with ERC1 may be mediated by PHLDB2. Interacts with GCC2; recruits CLASP2 to Golgi membranes. Interacts with CLIP2 and RSN. Interacts with MACF1. Interacts with mtcl2. Interacts with MTCL1. Post-translationally, phosphorylated by GSK3B. Phosphorylation by GSK3B may negatively regulate binding to microtubule lattices in lamella. Isoform 2 is phosphorylated on Ser-241. Highly expressed in brain and at low levels in heart, kidney and lung.

It localises to the cytoplasm. The protein localises to the cytoskeleton. Its subcellular location is the microtubule organizing center. The protein resides in the centrosome. It is found in the chromosome. It localises to the centromere. The protein localises to the kinetochore. Its subcellular location is the spindle. The protein resides in the spindle pole. It is found in the golgi apparatus. It localises to the trans-Golgi network. The protein localises to the cell membrane. Its subcellular location is the cell projection. The protein resides in the ruffle membrane. It is found in the cell cortex. Microtubule plus-end tracking protein that promotes the stabilization of dynamic microtubules. Involved in the nucleation of noncentrosomal microtubules originating from the trans-Golgi network (TGN). Required for the polarization of the cytoplasmic microtubule arrays in migrating cells towards the leading edge of the cell. May act at the cell cortex to enhance the frequency of rescue of depolymerizing microtubules by attaching their plus-ends to cortical platforms composed of ERC1 and PHLDB2. This cortical microtubule stabilizing activity is regulated at least in part by phosphatidylinositol 3-kinase signaling. Also performs a similar stabilizing function at the kinetochore which is essential for the bipolar alignment of chromosomes on the mitotic spindle. Acts as a mediator of ERBB2-dependent stabilization of microtubules at the cell cortex. The polypeptide is CLIP-associating protein 2 (Clasp2) (Mus musculus (Mouse)).